Here is a 324-residue protein sequence, read N- to C-terminus: Glyoxylate/hydroxypyruvate reductase B (324 aa).

Residues Arg-237 and Glu-266 contribute to the active site. The active-site Proton donor is His-285.

The protein belongs to the D-isomer specific 2-hydroxyacid dehydrogenase family. GhrB subfamily. In terms of assembly, homodimer.

The protein localises to the cytoplasm. The catalysed reaction is glycolate + NADP(+) = glyoxylate + NADPH + H(+). It carries out the reaction (R)-glycerate + NAD(+) = 3-hydroxypyruvate + NADH + H(+). The enzyme catalyses (R)-glycerate + NADP(+) = 3-hydroxypyruvate + NADPH + H(+). Its function is as follows. Catalyzes the NADPH-dependent reduction of glyoxylate and hydroxypyruvate into glycolate and glycerate, respectively. This is Glyoxylate/hydroxypyruvate reductase B from Escherichia coli (strain K12 / MC4100 / BW2952).